The sequence spans 637 residues: 3D-(3,5/4)-trihydroxycyclohexane-1,2-dione hydrolase (637 aa).

Glu-66 serves as a coordination point for thiamine diphosphate. Residues 442-522 form a thiamine pyrophosphate binding region; it reads SLPGDLQRLW…INVLLFDNSG (81 aa). Mg(2+) is bound by residues Asp-493 and Asn-520.

The protein belongs to the TPP enzyme family. Mg(2+) serves as cofactor. The cofactor is thiamine diphosphate.

It carries out the reaction 3D-3,5/4-trihydroxycyclohexane-1,2-dione + H2O = 5-deoxy-D-glucuronate + H(+). Its pathway is polyol metabolism; myo-inositol degradation into acetyl-CoA; acetyl-CoA from myo-inositol: step 3/7. Involved in the cleavage of the C1-C2 bond of 3D-(3,5/4)-trihydroxycyclohexane-1,2-dione (THcHDO) to yield 5-deoxy-glucuronate (5DG). This Bacillus licheniformis (strain ATCC 14580 / DSM 13 / JCM 2505 / CCUG 7422 / NBRC 12200 / NCIMB 9375 / NCTC 10341 / NRRL NRS-1264 / Gibson 46) protein is 3D-(3,5/4)-trihydroxycyclohexane-1,2-dione hydrolase.